Reading from the N-terminus, the 422-residue chain is Golgi-associated RAB2 interactor protein 2 (422 aa).

The segment at 353 to 404 (PVESEANTSKEMKDKTSEEKMPDFQSTALKAEESRSLRTESNTSVLSPHIKS) is disordered. Positions 360 to 374 (TSKEMKDKTSEEKMP) are enriched in basic and acidic residues.

The protein belongs to the GARIN family. Interacts with CALM1. In terms of tissue distribution, expressed in spermatozoa (at protein level).

The protein localises to the cell projection. Its subcellular location is the cilium. The protein resides in the flagellum. Seems to play a role in sperm motility. In Homo sapiens (Human), this protein is Golgi-associated RAB2 interactor protein 2.